The following is a 117-amino-acid chain: MPRVKRGVQARARHKKVLKQAKGYYGARSRVYRVAFQAVTKAGQYAYRDRRAKKRQFRQLWIARINAASRQNGLSYSRFINGLKKASIEIDRKILADIAVFDKAAFAVLVEKAKAAL.

This sequence belongs to the bacterial ribosomal protein bL20 family.

In terms of biological role, binds directly to 23S ribosomal RNA and is necessary for the in vitro assembly process of the 50S ribosomal subunit. It is not involved in the protein synthesizing functions of that subunit. In Vibrio campbellii (strain ATCC BAA-1116), this protein is Large ribosomal subunit protein bL20.